The primary structure comprises 207 residues: Large ribosomal subunit protein uL3 (207 aa).

The segment at 129–152 (AGGPAGHGSRFQRHPGSIGSNTTP) is disordered.

This sequence belongs to the universal ribosomal protein uL3 family. In terms of assembly, part of the 50S ribosomal subunit. Forms a cluster with proteins L14 and L19.

Its function is as follows. One of the primary rRNA binding proteins, it binds directly near the 3'-end of the 23S rRNA, where it nucleates assembly of the 50S subunit. The sequence is that of Large ribosomal subunit protein uL3 from Leptospira biflexa serovar Patoc (strain Patoc 1 / ATCC 23582 / Paris).